Reading from the N-terminus, the 258-residue chain is Global transcriptional regulator CodY (258 aa).

Positions 1–156 (MSTLLDKTRK…SATIVGLEIL (156 aa)) are GAF domain. A DNA-binding region (H-T-H motif) is located at residues 204-223 (ASKIADKVGITRSVIVNALR).

It belongs to the CodY family.

The protein localises to the cytoplasm. Functionally, DNA-binding global transcriptional regulator which is involved in the adaptive response to starvation and acts by directly or indirectly controlling the expression of numerous genes in response to nutrient availability. During rapid exponential growth, CodY is highly active and represses genes whose products allow adaptation to nutrient depletion. The polypeptide is Global transcriptional regulator CodY (Clostridium kluyveri (strain NBRC 12016)).